Reading from the N-terminus, the 385-residue chain is Neuropeptide Y receptor type 2 (385 aa).

Topologically, residues 1 to 54 (MGPLEAIGEENQTDEMKMELFTKLYLPRYTTPVSELALDPKPELKDSTTLVEVQ) are extracellular. An N-linked (GlcNAc...) asparagine glycan is attached at asparagine 11. Residues 55-75 (IILIFAYCSIILLGVIGNSLV) form a helical membrane-spanning segment. At 76 to 90 (IHVIIKFKSMRTVTN) the chain is on the cytoplasmic side. Residues 91 to 111 (FFIANLAVADLLVNTLCLPFT) traverse the membrane as a helical segment. Residues 112-128 (LVYTLLGEWKLGPVLCH) lie on the Extracellular side of the membrane. Cysteine 127 and cysteine 207 form a disulfide bridge. The chain crosses the membrane as a helical span at residues 129-149 (LVPYAQALAVHVSTVTLTVIA). Topologically, residues 150–169 (LDRHRCIVYHLESKISKRIS) are cytoplasmic. A helical membrane pass occupies residues 170 to 190 (FLIIGVAWAVSALLASPLAIF). The Extracellular portion of the chain corresponds to 191 to 221 (REYSLIEIIPDFKIVVCSEKWPGEGQLNYGT). Residues 222 to 242 (IYSVSMLLIQYVLPLAIISYA) form a helical membrane-spanning segment. At 243 to 273 (YTRIWTKLKNHVSPGAGNDHYHHRRQKTTKM) the chain is on the cytoplasmic side. A helical transmembrane segment spans residues 274–294 (LVCVVVVFAVSWLPFHAFQLV). Residues 295-308 (SDIDSQVLDLKEYK) are Extracellular-facing. Residues 309–329 (LIYTVFHVIAMCSTFANPLLY) form a helical membrane-spanning segment. Residues 330–385 (GWMNNNYRTAFLTAFQCEQRLDSIHPEVSAAFKARKKLEAKKSQFPGDSFTQPTNV) are Cytoplasmic-facing. A lipid anchor (S-palmitoyl cysteine) is attached at cysteine 346.

Belongs to the G-protein coupled receptor 1 family.

Its subcellular location is the cell membrane. In terms of biological role, receptor for neuropeptide Y and peptide YY. The protein is Neuropeptide Y receptor type 2 (NPY2R) of Gallus gallus (Chicken).